The following is a 1290-amino-acid chain: DNA-directed RNA polymerase subunit beta' (1290 aa).

Residues C60, C62, C75, and C78 each coordinate Zn(2+). Mg(2+) contacts are provided by D535, D537, and D539. C875, C953, C960, and C963 together coordinate Zn(2+).

It belongs to the RNA polymerase beta' chain family. The RNAP catalytic core consists of 2 alpha, 1 beta, 1 beta' and 1 omega subunit. When a sigma factor is associated with the core the holoenzyme is formed, which can initiate transcription. The cofactor is Mg(2+). Zn(2+) serves as cofactor.

The enzyme catalyses RNA(n) + a ribonucleoside 5'-triphosphate = RNA(n+1) + diphosphate. Its function is as follows. DNA-dependent RNA polymerase catalyzes the transcription of DNA into RNA using the four ribonucleoside triphosphates as substrates. The chain is DNA-directed RNA polymerase subunit beta' from Nocardioides sp. (strain ATCC BAA-499 / JS614).